The primary structure comprises 350 residues: S-adenosylmethionine:tRNA ribosyltransferase-isomerase (350 aa).

The protein belongs to the QueA family. Monomer.

The protein resides in the cytoplasm. It carries out the reaction 7-aminomethyl-7-carbaguanosine(34) in tRNA + S-adenosyl-L-methionine = epoxyqueuosine(34) in tRNA + adenine + L-methionine + 2 H(+). Its pathway is tRNA modification; tRNA-queuosine biosynthesis. Transfers and isomerizes the ribose moiety from AdoMet to the 7-aminomethyl group of 7-deazaguanine (preQ1-tRNA) to give epoxyqueuosine (oQ-tRNA). This Aliivibrio salmonicida (strain LFI1238) (Vibrio salmonicida (strain LFI1238)) protein is S-adenosylmethionine:tRNA ribosyltransferase-isomerase.